Here is a 274-residue protein sequence, read N- to C-terminus: Dermonecrotic toxin SdSicTox-betaIIB1bix (274 aa).

The active site involves His5. Mg(2+) is bound by residues Glu25 and Asp27. The Nucleophile role is filled by His41. 2 cysteine pairs are disulfide-bonded: Cys45-Cys51 and Cys47-Cys190. Mg(2+) is bound at residue Asp85.

The protein belongs to the arthropod phospholipase D family. Class II subfamily. Requires Mg(2+) as cofactor. Expressed by the venom gland.

It localises to the secreted. It catalyses the reaction an N-(acyl)-sphingosylphosphocholine = an N-(acyl)-sphingosyl-1,3-cyclic phosphate + choline. It carries out the reaction an N-(acyl)-sphingosylphosphoethanolamine = an N-(acyl)-sphingosyl-1,3-cyclic phosphate + ethanolamine. The enzyme catalyses a 1-acyl-sn-glycero-3-phosphocholine = a 1-acyl-sn-glycero-2,3-cyclic phosphate + choline. The catalysed reaction is a 1-acyl-sn-glycero-3-phosphoethanolamine = a 1-acyl-sn-glycero-2,3-cyclic phosphate + ethanolamine. Its function is as follows. Dermonecrotic toxins cleave the phosphodiester linkage between the phosphate and headgroup of certain phospholipids (sphingolipid and lysolipid substrates), forming an alcohol (often choline) and a cyclic phosphate. This toxin acts on sphingomyelin (SM). It may also act on ceramide phosphoethanolamine (CPE), lysophosphatidylcholine (LPC) and lysophosphatidylethanolamine (LPE), but not on lysophosphatidylserine (LPS), and lysophosphatidylglycerol (LPG). It acts by transphosphatidylation, releasing exclusively cyclic phosphate products as second products. Induces dermonecrosis, hemolysis, increased vascular permeability, edema, inflammatory response, and platelet aggregation. The sequence is that of Dermonecrotic toxin SdSicTox-betaIIB1bix from Sicarius cf. damarensis (strain GJB-2008) (Six-eyed sand spider).